The sequence spans 464 residues: 3-isopropylmalate dehydratase large subunit (464 aa).

[4Fe-4S] cluster-binding residues include cysteine 337, cysteine 397, and cysteine 400.

The protein belongs to the aconitase/IPM isomerase family. LeuC type 1 subfamily. As to quaternary structure, heterodimer of LeuC and LeuD. It depends on [4Fe-4S] cluster as a cofactor.

The enzyme catalyses (2R,3S)-3-isopropylmalate = (2S)-2-isopropylmalate. It participates in amino-acid biosynthesis; L-leucine biosynthesis; L-leucine from 3-methyl-2-oxobutanoate: step 2/4. Its function is as follows. Catalyzes the isomerization between 2-isopropylmalate and 3-isopropylmalate, via the formation of 2-isopropylmaleate. The protein is 3-isopropylmalate dehydratase large subunit of Bacillus cereus (strain ATCC 14579 / DSM 31 / CCUG 7414 / JCM 2152 / NBRC 15305 / NCIMB 9373 / NCTC 2599 / NRRL B-3711).